Here is an 81-residue protein sequence, read N- to C-terminus: Protein Vpu (81 aa).

Topologically, residues 1 to 6 are extracellular; sequence MQPIQI. A helical transmembrane segment spans residues 7 to 27; that stretch reads AIVALVVAIIIAIVVWSIVII. The Cytoplasmic segment spans residues 28-81; that stretch reads EYRKILRQRKIDRLIDRLIERAEDSGNESEGEISALAEMGVEMGHHAPWDVDDL. A phosphoserine; by host CK2 mark is found at S52 and S56.

This sequence belongs to the HIV-1 VPU protein family. Homopentamer. Interacts with host CD4 and BRTC; these interactions induce proteasomal degradation of CD4. Interacts with host BST2; this interaction leads to the degradation of host BST2. Interacts with host FBXW11. Interacts with host AP1M1; this interaction plays a role in the mistrafficking and subsequent degradation of host BST2. Interacts with host RANBP2; this interaction allows Vpu to down-regulate host BLM sumoylation. Post-translationally, phosphorylated by host CK2. This phosphorylation is necessary for interaction with human BTRC and degradation of CD4.

The protein resides in the host membrane. With respect to regulation, ion channel activity is inhibited by hexamethylene amiloride in vitro. Functionally, enhances virion budding by targeting host CD4 and Tetherin/BST2 to proteasome degradation. Degradation of CD4 prevents any unwanted premature interactions between viral Env and its host receptor CD4 in the endoplasmic reticulum. Degradation of antiretroviral protein Tetherin/BST2 is important for virion budding, as BST2 tethers new viral particles to the host cell membrane. Mechanistically, Vpu bridges either CD4 or BST2 to BTRC, a substrate recognition subunit of the Skp1/Cullin/F-box protein E3 ubiquitin ligase, induces their ubiquitination and subsequent proteasomal degradation. The alteration of the E3 ligase specificity by Vpu seems to promote the degradation of host IKBKB, leading to NF-kappa-B down-regulation and subsequent apoptosis. Acts as a viroporin that forms an oligomeric ion channel in membranes. Modulates the host DNA repair mechanisms to promote degradation of nuclear viral cDNA in cells that are already productively infected in order to suppress immune sensing and proviral hyper-integration (superinfection). Manipulates PML-NBs and modulates SUMOylation of host BLM protein thereby enhancing its DNA-end processing activity toward viral unintegrated linear DNA. Also inhibits RAD52-mediated homologous repair of viral cDNA, preventing the generation of dead-end circular forms of single copies of the long terminal repeat and permitting sustained nucleolytic attack. This chain is Protein Vpu, found in Homo sapiens (Human).